A 171-amino-acid chain; its full sequence is Large ribosomal subunit protein uL10 (171 aa).

This sequence belongs to the universal ribosomal protein uL10 family. In terms of assembly, part of the ribosomal stalk of the 50S ribosomal subunit. The N-terminus interacts with L11 and the large rRNA to form the base of the stalk. The C-terminus forms an elongated spine to which L12 dimers bind in a sequential fashion forming a multimeric L10(L12)X complex.

Forms part of the ribosomal stalk, playing a central role in the interaction of the ribosome with GTP-bound translation factors. The polypeptide is Large ribosomal subunit protein uL10 (Nitrosomonas europaea (strain ATCC 19718 / CIP 103999 / KCTC 2705 / NBRC 14298)).